We begin with the raw amino-acid sequence, 226 residues long: PtdIns3K complex I subunit atg38 (226 aa).

An N-acetylserine modification is found at Ser2. Coiled-coil stretches lie at residues 52–85 (DVTQ…ENNI) and 182–209 (FKEY…LRER).

Belongs to the ATG38 family. Homodimer. Component of the autophagy-specific VPS34 PI3-kinase complex I composed of VPS15, VPS30, VPS34, ATG14 and an ATG38 homodimer. Interacts directly with ATG14 and VPS34.

The protein localises to the cytoplasm. Its subcellular location is the preautophagosomal structure membrane. Functionally, autophagy-related protein required for cytoplasm to vacuole transport (Cvt) and autophagy as a part of the autophagy-specific VPS34 PI3-kinase complex I. This complex is essential to recruit the ATG8-phosphatidylinositol conjugate and the ATG12-ATG5 conjugate to the pre-autophagosomal structure. ATG38 is required for the integrity of the active PI3-kinase complex I by maintaining an association between VPS15-VPS34 and ATG14-VPS30 subcomplexes. The protein is PtdIns3K complex I subunit atg38 of Saccharomyces cerevisiae (strain ATCC 204508 / S288c) (Baker's yeast).